A 317-amino-acid chain; its full sequence is Retinol dehydrogenase 7 (317 aa).

33 to 57 (FITGCDSGFGNLLARQLDRRGMRVL) is an NADP(+) binding site. Residue Ser164 coordinates substrate. Tyr176 acts as the Proton acceptor in catalysis.

Belongs to the short-chain dehydrogenases/reductases (SDR) family.

The protein localises to the microsome. It is found in the endoplasmic reticulum. The catalysed reaction is all-trans-retinol--[retinol-binding protein] + NAD(+) = all-trans-retinal--[retinol-binding protein] + NADH + H(+). The protein operates within cofactor metabolism; retinol metabolism. Acts on retinol bound on cellular retinol-binding protein (CRBP). The protein is Retinol dehydrogenase 7 of Rattus norvegicus (Rat).